Here is a 384-residue protein sequence, read N- to C-terminus: Dual-specificity RNA methyltransferase RlmN (384 aa).

Glu-105 (proton acceptor) is an active-site residue. Residues 111–350 (EDDRATLCVS…TIVRKTRGDD (240 aa)) enclose the Radical SAM core domain. A disulfide bridge links Cys-118 with Cys-355. Residues Cys-125, Cys-129, and Cys-132 each coordinate [4Fe-4S] cluster. S-adenosyl-L-methionine is bound by residues 179 to 180 (GE), Ser-211, 233 to 235 (SLH), and Asn-312. Cys-355 acts as the S-methylcysteine intermediate in catalysis.

This sequence belongs to the radical SAM superfamily. RlmN family. The cofactor is [4Fe-4S] cluster.

The protein resides in the cytoplasm. The catalysed reaction is adenosine(2503) in 23S rRNA + 2 reduced [2Fe-2S]-[ferredoxin] + 2 S-adenosyl-L-methionine = 2-methyladenosine(2503) in 23S rRNA + 5'-deoxyadenosine + L-methionine + 2 oxidized [2Fe-2S]-[ferredoxin] + S-adenosyl-L-homocysteine. It carries out the reaction adenosine(37) in tRNA + 2 reduced [2Fe-2S]-[ferredoxin] + 2 S-adenosyl-L-methionine = 2-methyladenosine(37) in tRNA + 5'-deoxyadenosine + L-methionine + 2 oxidized [2Fe-2S]-[ferredoxin] + S-adenosyl-L-homocysteine. In terms of biological role, specifically methylates position 2 of adenine 2503 in 23S rRNA and position 2 of adenine 37 in tRNAs. m2A2503 modification seems to play a crucial role in the proofreading step occurring at the peptidyl transferase center and thus would serve to optimize ribosomal fidelity. The chain is Dual-specificity RNA methyltransferase RlmN from Shigella flexneri serotype 5b (strain 8401).